Consider the following 305-residue polypeptide: RxLR effector protein PexRD25 (305 aa).

The first 16 residues, 1 to 16, serve as a signal peptide directing secretion; that stretch reads MRFLFYMLLACSAVVA. A RxLR-dEER motif is present at residues 44-56; that stretch reads RLLRDRRSVDEER.

The protein belongs to the RxLR effector family.

It localises to the secreted. The protein resides in the host nucleus. Its subcellular location is the host nucleolus. Functionally, effector that enhances P.infestans colonization of Nicotiana benthamiana leaves. This is RxLR effector protein PexRD25 from Phytophthora infestans (strain T30-4) (Potato late blight agent).